Consider the following 252-residue polypeptide: Protein BTG3 (252 aa).

The segment at 138 to 163 (VTSDYHSGSSSSDEDTSKEVDVKPSS) is disordered.

The protein belongs to the BTG family. As to expression, ubiquitous.

Its function is as follows. Overexpression impairs serum-induced cell cycle progression from the G0/G1 to S phase. This chain is Protein BTG3 (Btg3), found in Mus musculus (Mouse).